The primary structure comprises 615 residues: Lipoprotein LpqB (615 aa).

Residues 1–29 (MGADRGRGGRRRPARVVAYAVGGVVLLAG) form the signal peptide. The N-palmitoyl cysteine moiety is linked to residue Cys30. Residue Cys30 is the site of S-diacylglycerol cysteine attachment. Residues 100–123 (PDESATVLAGGPGTESDHSGNRED) are disordered. Positions 114-123 (ESDHSGNRED) are enriched in basic and acidic residues.

Belongs to the LpqB lipoprotein family.

It localises to the cell membrane. The protein is Lipoprotein LpqB of Streptomyces coelicolor (strain ATCC BAA-471 / A3(2) / M145).